We begin with the raw amino-acid sequence, 325 residues long: Metacaspase-9 (325 aa).

Residues H95 and C147 contribute to the active site. Residue C147 is modified to S-nitrosocysteine. A glycan (N-linked (GlcNAc...) asparagine) is linked at N177.

Belongs to the peptidase C14B family. Post-translationally, the two subunits are derived from the precursor sequence by an autocatalytic mechanism. S-nitrosylation at Cys-147 suppresses both autoprocessing and proteolytic activity of the full-length protein, but does not affect the activity of the mature processed form. In terms of tissue distribution, expressed in root tips, cauline leaves, flowers and siliques.

Its subcellular location is the secreted. The protein resides in the extracellular space. The protein localises to the apoplast. Inhibited by serpin ZX and nitric oxide through cysteine nitrosylation. In terms of biological role, cysteine protease that cleaves specifically after arginine or lysine residues. Does not cleave caspase-specific substrates. Required for proteolytic processing of GRI. The sequence is that of Metacaspase-9 (AMC9) from Arabidopsis thaliana (Mouse-ear cress).